The following is a 248-amino-acid chain: Ubiquinone biosynthesis O-methyltransferase (248 aa).

Residues Arg41, Gly72, Asp93, and Met136 each coordinate S-adenosyl-L-methionine.

This sequence belongs to the methyltransferase superfamily. UbiG/COQ3 family.

The enzyme catalyses a 3-demethylubiquinol + S-adenosyl-L-methionine = a ubiquinol + S-adenosyl-L-homocysteine + H(+). It carries out the reaction a 3-(all-trans-polyprenyl)benzene-1,2-diol + S-adenosyl-L-methionine = a 2-methoxy-6-(all-trans-polyprenyl)phenol + S-adenosyl-L-homocysteine + H(+). Its pathway is cofactor biosynthesis; ubiquinone biosynthesis. Functionally, O-methyltransferase that catalyzes the 2 O-methylation steps in the ubiquinone biosynthetic pathway. The protein is Ubiquinone biosynthesis O-methyltransferase of Rhizobium etli (strain CIAT 652).